We begin with the raw amino-acid sequence, 130 residues long: MVVRSWRHMKERYNLIGTRCKTCGKVYFPSRTVCPDCRRKGELEEFQLSGKGKIYTYSIVYAPPKEFNKLTPYVIAIVELEEGPKVTAQVDCDINKISIGIPVEAAFRRIKEDGKDGIISYGYKFVPITE.

Zn(2+)-binding residues include Cys-20, Cys-23, Cys-34, and Cys-37.

Belongs to the scaffold protein DUF35 family. As to quaternary structure, interacts with acetoacetyl-CoA thiolase and HMG-CoA synthase (HMGCS) that catalyzes the first and second step in the mevalonate pathway, respectively.

Its function is as follows. Functions as a scaffold to connect the acetoacetyl-CoA thiolase and HMG-CoA synthase (HMGCS) dimers in the channeling thiolase/HMGCS complex, which allows for efficient coupling of the endergonic thiolase reaction with the exergonic HMGCS reaction. This Methanothermococcus thermolithotrophicus (Methanococcus thermolithotrophicus) protein is DUF35 domain-containing scaffold protein.